We begin with the raw amino-acid sequence, 1476 residues long: ABC-type transporter frbG (1476 aa).

5 helical membrane passes run Leu-26–Leu-46, Leu-64–Ile-84, Ser-97–Leu-117, Ser-122–Ile-142, and Thr-146–Leu-166. Asn-244 carries an N-linked (GlcNAc...) asparagine glycan. A run of 4 helical transmembrane segments spans residues Phe-266–Leu-286, Ala-302–Ile-322, Leu-380–Leu-400, and Ile-409–Ala-429. One can recognise an ABC transmembrane type-1 1 domain in the interval Leu-274–Leu-553. Asn-464 is a glycosylation site (N-linked (GlcNAc...) asparagine). A run of 2 helical transmembrane segments spans residues Cys-487–Phe-507 and Ile-533–Leu-553. Residues Ile-619–Ser-845 form the ABC transporter 1 domain. Gly-652 to Ser-659 is an ATP binding site. N-linked (GlcNAc...) asparagine glycosylation is found at Asn-694, Asn-776, Asn-805, and Asn-842. Transmembrane regions (helical) follow at residues Ala-898–Val-918, Tyr-936–Ser-956, Leu-1017–Val-1037, Leu-1121–Val-1141, and Gly-1151–Ile-1171. The ABC transmembrane type-1 2 domain occupies Ala-898 to Thr-1179. The region spanning Ile-1216–Pro-1447 is the ABC transporter 2 domain. The N-linked (GlcNAc...) asparagine glycan is linked to Asn-1235. Residue Gly-1250–Ser-1257 participates in ATP binding.

It belongs to the ABC transporter superfamily. ABCC family. Conjugate transporter (TC 3.A.1.208) subfamily.

The protein resides in the cell membrane. Its function is as follows. ABC-type transporter; part of the gene cluster that mediates the biosynthesis of the antifungal antibiotic FR901469, an inhibitor of beta-1,3-glucansynthase, exerting antifungal activity against the pathogenes Candida albicans and Aspergillus fumigatus. FR901469 is a cyclic depsipeptide containing 12 amino acid residues and a fatty acid chain. Probably involved in the secretion of FR901469. This chain is ABC-type transporter frbG, found in Dothideomycetidae sp. (strain 11243) (Fungal sp. (strain No.11243)).